Consider the following 120-residue polypeptide: MANPTQLYRRNSTWRKNVLRSLSTEIIVNGKITTTLTRAKELRKVVDKLITKGKKNTLASRRLAAASMRKIKTKDGTDALKYLFDTLAPKYKNRNGGYTRIIKLPPRQGDNTKMAIIELV.

The protein belongs to the bacterial ribosomal protein bL17 family. Part of the 50S ribosomal subunit. Contacts protein L32.

The sequence is that of Large ribosomal subunit protein bL17 from Mycoplasmopsis pulmonis (strain UAB CTIP) (Mycoplasma pulmonis).